Consider the following 701-residue polypeptide: Elongation factor G (701 aa).

The region spanning 8 to 290 (KHYRNIGISA…AVIEYLPAPI (283 aa)) is the tr-type G domain. GTP contacts are provided by residues 17–24 (AHIDAGKT), 88–92 (DTPGH), and 142–145 (NKMD).

This sequence belongs to the TRAFAC class translation factor GTPase superfamily. Classic translation factor GTPase family. EF-G/EF-2 subfamily.

It is found in the cytoplasm. Catalyzes the GTP-dependent ribosomal translocation step during translation elongation. During this step, the ribosome changes from the pre-translocational (PRE) to the post-translocational (POST) state as the newly formed A-site-bound peptidyl-tRNA and P-site-bound deacylated tRNA move to the P and E sites, respectively. Catalyzes the coordinated movement of the two tRNA molecules, the mRNA and conformational changes in the ribosome. In Hamiltonella defensa subsp. Acyrthosiphon pisum (strain 5AT), this protein is Elongation factor G.